The primary structure comprises 475 residues: UDP-N-acetylmuramate--L-alanine ligase (475 aa).

An ATP-binding site is contributed by 125-131 (GTHGKTS).

Belongs to the MurCDEF family.

It localises to the cytoplasm. The catalysed reaction is UDP-N-acetyl-alpha-D-muramate + L-alanine + ATP = UDP-N-acetyl-alpha-D-muramoyl-L-alanine + ADP + phosphate + H(+). Its pathway is cell wall biogenesis; peptidoglycan biosynthesis. Its function is as follows. Cell wall formation. The protein is UDP-N-acetylmuramate--L-alanine ligase of Mycolicibacterium gilvum (strain PYR-GCK) (Mycobacterium gilvum (strain PYR-GCK)).